The sequence spans 792 residues: Phenylalanine--tRNA ligase beta subunit (792 aa).

Residues 39–147 (GESLGQVVVA…DDAPVGQALA (109 aa)) form the tRNA-binding domain. Residues 400-475 (PQPARIRLRR…RIHGYDRVPT (76 aa)) form the B5 domain. The Mg(2+) site is built by Asp-453, Asp-459, Glu-462, and Glu-463. An FDX-ACB domain is found at 698–791 (SRFPSVRRDL…IEREHRARIR (94 aa)).

The protein belongs to the phenylalanyl-tRNA synthetase beta subunit family. Type 1 subfamily. As to quaternary structure, tetramer of two alpha and two beta subunits. Mg(2+) is required as a cofactor.

The protein localises to the cytoplasm. The catalysed reaction is tRNA(Phe) + L-phenylalanine + ATP = L-phenylalanyl-tRNA(Phe) + AMP + diphosphate + H(+). The polypeptide is Phenylalanine--tRNA ligase beta subunit (Xanthomonas euvesicatoria pv. vesicatoria (strain 85-10) (Xanthomonas campestris pv. vesicatoria)).